The chain runs to 200 residues: LexA repressor (200 aa).

The H-T-H motif DNA-binding region spans 28 to 48 (RAEIAQHFGFSSPNAAEQHLK). Active-site for autocatalytic cleavage activity residues include Ser117 and Lys154.

This sequence belongs to the peptidase S24 family. As to quaternary structure, homodimer.

It catalyses the reaction Hydrolysis of Ala-|-Gly bond in repressor LexA.. In terms of biological role, represses a number of genes involved in the response to DNA damage (SOS response), including recA and lexA. In the presence of single-stranded DNA, RecA interacts with LexA causing an autocatalytic cleavage which disrupts the DNA-binding part of LexA, leading to derepression of the SOS regulon and eventually DNA repair. This chain is LexA repressor, found in Thiobacillus denitrificans (strain ATCC 25259 / T1).